A 116-amino-acid polypeptide reads, in one-letter code: Diuretic hormone class 2 (116 aa).

Positions 1-25 (MTNRCACFALAFLLFCLLAISSIEA) are cleaved as a signal peptide. Positions 26 to 75 (APMPSQSNGGYGGAGYNELEEVPDDLLMELMTRFGRTIIRARNDLENSKR) are excised as a propeptide. Proline 106 is modified (proline amide). A propeptide spanning residues 112–116 (SETDV) is cleaved from the precursor.

It is found in the secreted. Functionally, regulation of fluid secretion. Stimulates Malpighian tubules fluid secretion by activating the apical membrane V-ATPase via cyclic AMP of principal cells in the main secretory segment. This is Diuretic hormone class 2 (Dh31) from Drosophila melanogaster (Fruit fly).